Consider the following 477-residue polypeptide: Bifunctional protein HldE (477 aa).

The interval 1 to 318 (MKVTLPEFER…ENAVRGRADT (318 aa)) is ribokinase. K179 carries the N6-acetyllysine modification. Position 195-198 (195-198 (NLSE)) interacts with ATP. D264 is a catalytic residue. Residues 344–477 (MTNGVFDILH…IKKIQQDKKG (134 aa)) are cytidylyltransferase.

In the N-terminal section; belongs to the carbohydrate kinase PfkB family. It in the C-terminal section; belongs to the cytidylyltransferase family. In terms of assembly, homodimer.

It carries out the reaction D-glycero-beta-D-manno-heptose 7-phosphate + ATP = D-glycero-beta-D-manno-heptose 1,7-bisphosphate + ADP + H(+). The enzyme catalyses D-glycero-beta-D-manno-heptose 1-phosphate + ATP + H(+) = ADP-D-glycero-beta-D-manno-heptose + diphosphate. It participates in nucleotide-sugar biosynthesis; ADP-L-glycero-beta-D-manno-heptose biosynthesis; ADP-L-glycero-beta-D-manno-heptose from D-glycero-beta-D-manno-heptose 7-phosphate: step 1/4. Its pathway is nucleotide-sugar biosynthesis; ADP-L-glycero-beta-D-manno-heptose biosynthesis; ADP-L-glycero-beta-D-manno-heptose from D-glycero-beta-D-manno-heptose 7-phosphate: step 3/4. The protein operates within bacterial outer membrane biogenesis; LPS core biosynthesis. Catalyzes the phosphorylation of D-glycero-D-manno-heptose 7-phosphate at the C-1 position to selectively form D-glycero-beta-D-manno-heptose-1,7-bisphosphate. In terms of biological role, catalyzes the ADP transfer from ATP to D-glycero-beta-D-manno-heptose 1-phosphate, yielding ADP-D-glycero-beta-D-manno-heptose. The polypeptide is Bifunctional protein HldE (Shigella flexneri).